The sequence spans 126 residues: UPF0047 protein AF_2050 (126 aa).

The protein belongs to the UPF0047 family.

The protein is UPF0047 protein AF_2050 of Archaeoglobus fulgidus (strain ATCC 49558 / DSM 4304 / JCM 9628 / NBRC 100126 / VC-16).